The sequence spans 98 residues: Large ribosomal subunit protein uL23 (98 aa).

Belongs to the universal ribosomal protein uL23 family. In terms of assembly, part of the 50S ribosomal subunit. Contacts protein L29, and trigger factor when it is bound to the ribosome.

One of the early assembly proteins it binds 23S rRNA. One of the proteins that surrounds the polypeptide exit tunnel on the outside of the ribosome. Forms the main docking site for trigger factor binding to the ribosome. The protein is Large ribosomal subunit protein uL23 of Hahella chejuensis (strain KCTC 2396).